A 145-amino-acid chain; its full sequence is Methyl-coenzyme M reductase I operon protein D (145 aa).

As to quaternary structure, MCR is composed of three subunits: alpha, beta, and gamma. The function of proteins C and D is not known.

This is Methyl-coenzyme M reductase I operon protein D (mcrD) from Methanothermobacter marburgensis (strain ATCC BAA-927 / DSM 2133 / JCM 14651 / NBRC 100331 / OCM 82 / Marburg) (Methanobacterium thermoautotrophicum).